Consider the following 71-residue polypeptide: Protein SlyX homolog (71 aa).

It belongs to the SlyX family.

This is Protein SlyX homolog from Thioalkalivibrio sulfidiphilus (strain HL-EbGR7).